We begin with the raw amino-acid sequence, 907 residues long: Isoleucine--tRNA ligase (907 aa).

The 'HIGH' region signature appears at 57–67 (PFANGKAHMGS). Position 549 (Glu-549) interacts with L-isoleucyl-5'-AMP. Residues 590–594 (KLSKS) carry the 'KMSKS' region motif. Lys-593 is a binding site for ATP. 4 residues coordinate Zn(2+): Cys-867, Cys-870, Cys-889, and Cys-892.

The protein belongs to the class-I aminoacyl-tRNA synthetase family. IleS type 1 subfamily. In terms of assembly, monomer. The cofactor is Zn(2+).

It localises to the cytoplasm. It carries out the reaction tRNA(Ile) + L-isoleucine + ATP = L-isoleucyl-tRNA(Ile) + AMP + diphosphate. In terms of biological role, catalyzes the attachment of isoleucine to tRNA(Ile). As IleRS can inadvertently accommodate and process structurally similar amino acids such as valine, to avoid such errors it has two additional distinct tRNA(Ile)-dependent editing activities. One activity is designated as 'pretransfer' editing and involves the hydrolysis of activated Val-AMP. The other activity is designated 'posttransfer' editing and involves deacylation of mischarged Val-tRNA(Ile). The chain is Isoleucine--tRNA ligase from Methylacidiphilum infernorum (isolate V4) (Methylokorus infernorum (strain V4)).